The primary structure comprises 205 residues: Lipoprotein MlpB (205 aa).

The signal sequence occupies residues 1 to 17 (MKIINILFCLLLIVLNS). Residue Cys-18 is the site of N-palmitoyl cysteine attachment. A lipid anchor (S-diacylglycerol cysteine) is attached at Cys-18.

This sequence belongs to the Multicopy lipoprotein (Mlp) family.

Its subcellular location is the cell outer membrane. Its function is as follows. An outer membrane protein that may participate in pathogenesis. Some human Lyme disease patients have antibodies against this protein. The Mlp proteins probably undergo intragenic recombination, generating new alleles. This chain is Lipoprotein MlpB, found in Borreliella burgdorferi (strain ATCC 35210 / DSM 4680 / CIP 102532 / B31) (Borrelia burgdorferi).